We begin with the raw amino-acid sequence, 339 residues long: METDIVVIGAGPVGIFTAFQAGMLDMRCHIIDVLDQAGGQCTALYPEKPIYDIPGYPVITAQKLIEQLMEQASPFEPVYHLSQRVEEIANNDSQSFIVVTSAGTKVKCKAIIIAAGNGIFEPNRPPLSGILEYENKSVFYNVNKISDFQDKIIVIAGGGDSAADWTVELSKVAKKIYVIHRRKEFRCVSETRNKLKLLESSGRIELVVPYQLHKLTGNDGQLSAVIIKNITSKEEKKISADFLLPFFGLSMDLGPIGSWDIQLERSRVVVDQATLRTSRDRIYAIGDVAAYLGKLKLILNGFAESTMACYDIYKVIHNSPVNFQYSTSKVVRGKKSDLL.

Residues Asp-32, Gln-40, Tyr-45, Val-85, Phe-120, Asp-287, and Thr-327 each contribute to the FAD site.

Belongs to the ferredoxin--NADP reductase type 2 family. In terms of assembly, homodimer. It depends on FAD as a cofactor.

The enzyme catalyses 2 reduced [2Fe-2S]-[ferredoxin] + NADP(+) + H(+) = 2 oxidized [2Fe-2S]-[ferredoxin] + NADPH. The chain is Ferredoxin--NADP reductase from Wolbachia sp. subsp. Brugia malayi (strain TRS).